The chain runs to 154 residues: 6,7-dimethyl-8-ribityllumazine synthase (154 aa).

Residues F21, 55–57, and 79–81 contribute to the 5-amino-6-(D-ribitylamino)uracil site; these read AFE and CVI. 84 to 85 contributes to the (2S)-2-hydroxy-3-oxobutyl phosphate binding site; that stretch reads AT. The active-site Proton donor is the H87. F111 provides a ligand contact to 5-amino-6-(D-ribitylamino)uracil. R125 is a binding site for (2S)-2-hydroxy-3-oxobutyl phosphate.

The protein belongs to the DMRL synthase family. As to quaternary structure, forms an icosahedral capsid composed of 60 subunits, arranged as a dodecamer of pentamers.

The enzyme catalyses (2S)-2-hydroxy-3-oxobutyl phosphate + 5-amino-6-(D-ribitylamino)uracil = 6,7-dimethyl-8-(1-D-ribityl)lumazine + phosphate + 2 H2O + H(+). The protein operates within cofactor biosynthesis; riboflavin biosynthesis; riboflavin from 2-hydroxy-3-oxobutyl phosphate and 5-amino-6-(D-ribitylamino)uracil: step 1/2. Catalyzes the formation of 6,7-dimethyl-8-ribityllumazine by condensation of 5-amino-6-(D-ribitylamino)uracil with 3,4-dihydroxy-2-butanone 4-phosphate. This is the penultimate step in the biosynthesis of riboflavin. The polypeptide is 6,7-dimethyl-8-ribityllumazine synthase (Macrococcus caseolyticus (strain JCSC5402) (Macrococcoides caseolyticum)).